We begin with the raw amino-acid sequence, 222 residues long: MNEELSTFFYVPVGTMMLAIAFPAILLPTPNRLITNRWITIQQWLIQLIMKQLLSIHNTKGLSWSLMLITLTLFIGLTNLLGLLPYSFAPTTQLTVNLSMAIPLWTGTVVPGFRYKTKISLAHLLPQGTPMFLIPMIIIIETISLLIRPVTLAVRLTANITAGHSLIHLTGTATLTLSSIHSMTITVTFVTVILLTILELAVALIQAYVFALLISLYLHENA.

6 helical membrane-spanning segments follow: residues 8-28, 64-84, 93-113, 127-147, 160-180, and 197-219; these read FFYV…ILLP, WSLM…LGLL, QLTV…VPGF, QGTP…SLLI, ITAG…LSSI, and ILEL…LYLH.

Belongs to the ATPase A chain family. Component of the ATP synthase complex composed at least of ATP5F1A/subunit alpha, ATP5F1B/subunit beta, ATP5MC1/subunit c (homooctomer), MT-ATP6/subunit a, MT-ATP8/subunit 8, ATP5ME/subunit e, ATP5MF/subunit f, ATP5MG/subunit g, ATP5MK/subunit k, ATP5MJ/subunit j, ATP5F1C/subunit gamma, ATP5F1D/subunit delta, ATP5F1E/subunit epsilon, ATP5PF/subunit F6, ATP5PB/subunit b, ATP5PD/subunit d, ATP5PO/subunit OSCP. ATP synthase complex consists of a soluble F(1) head domain (subunits alpha(3) and beta(3)) - the catalytic core - and a membrane F(0) domain - the membrane proton channel (subunits c, a, 8, e, f, g, k and j). These two domains are linked by a central stalk (subunits gamma, delta, and epsilon) rotating inside the F1 region and a stationary peripheral stalk (subunits F6, b, d, and OSCP). Interacts with DNAJC30; interaction is direct.

The protein localises to the mitochondrion inner membrane. It catalyses the reaction H(+)(in) = H(+)(out). Functionally, subunit a, of the mitochondrial membrane ATP synthase complex (F(1)F(0) ATP synthase or Complex V) that produces ATP from ADP in the presence of a proton gradient across the membrane which is generated by electron transport complexes of the respiratory chain. ATP synthase complex consist of a soluble F(1) head domain - the catalytic core - and a membrane F(1) domain - the membrane proton channel. These two domains are linked by a central stalk rotating inside the F(1) region and a stationary peripheral stalk. During catalysis, ATP synthesis in the catalytic domain of F(1) is coupled via a rotary mechanism of the central stalk subunits to proton translocation. With the subunit c (ATP5MC1), forms the proton-conducting channel in the F(0) domain, that contains two crucial half-channels (inlet and outlet) that facilitate proton movement from the mitochondrial intermembrane space (IMS) into the matrix. Protons are taken up via the inlet half-channel and released through the outlet half-channel, following a Grotthuss mechanism. The protein is ATP synthase F(0) complex subunit a of Loxodonta africana (African elephant).